The following is an 830-amino-acid chain: Ribosome biogenesis protein ERB1 (830 aa).

The disordered stretch occupies residues 1-142 (MAPQPLKVGT…NKDLPVDEKL (142 aa)). Acidic residues-rich tracts occupy residues 35 to 44 (VSEESDEEFG) and 52 to 109 (MSDD…DSDS). The segment covering 131–142 (EENKDLPVDEKL) has biased composition (basic and acidic residues). WD repeat units lie at residues 481-520 (PGDT…EVWR), 523-563 (LHAG…APHI), 660-698 (KTPG…LIRT), 701-740 (SGVK…KPYK), 744-783 (YHNR…DLMQ), and 799-830 (IDGI…LWCS).

The protein belongs to the WD repeat BOP1/ERB1 family. Component of the NOP7 complex, composed of ERB1, NOP7 and YTM1. The complex is held together by ERB1, which interacts with NOP7 via its N-terminal domain and with YTM1 via a high-affinity interaction between the seven-bladed beta-propeller domains of the 2 proteins. The NOP7 complex associates with the 66S pre-ribosome.

The protein resides in the nucleus. The protein localises to the nucleolus. It localises to the nucleoplasm. Component of the NOP7 complex, which is required for maturation of the 25S and 5.8S ribosomal RNAs and formation of the 60S ribosome. In Cryptococcus neoformans var. neoformans serotype D (strain JEC21 / ATCC MYA-565) (Filobasidiella neoformans), this protein is Ribosome biogenesis protein ERB1.